A 144-amino-acid chain; its full sequence is D-aminoacyl-tRNA deacylase (144 aa).

The Gly-cisPro motif, important for rejection of L-amino acids signature appears at 136-137 (GP).

The protein belongs to the DTD family. In terms of assembly, homodimer.

It is found in the cytoplasm. The catalysed reaction is glycyl-tRNA(Ala) + H2O = tRNA(Ala) + glycine + H(+). It catalyses the reaction a D-aminoacyl-tRNA + H2O = a tRNA + a D-alpha-amino acid + H(+). Its function is as follows. An aminoacyl-tRNA editing enzyme that deacylates mischarged D-aminoacyl-tRNAs. Also deacylates mischarged glycyl-tRNA(Ala), protecting cells against glycine mischarging by AlaRS. Acts via tRNA-based rather than protein-based catalysis; rejects L-amino acids rather than detecting D-amino acids in the active site. By recycling D-aminoacyl-tRNA to D-amino acids and free tRNA molecules, this enzyme counteracts the toxicity associated with the formation of D-aminoacyl-tRNA entities in vivo and helps enforce protein L-homochirality. The chain is D-aminoacyl-tRNA deacylase from Haemophilus ducreyi (strain 35000HP / ATCC 700724).